The primary structure comprises 653 residues: Choline transporter-like protein 3 (653 aa).

The chain crosses the membrane as a helical span at residues 34-54; that stretch reads WLFLFFLFWTGLVFIMGYSVV. Residues Asn-136 and Asn-151 are each glycosylated (N-linked (GlcNAc...) asparagine). A run of 5 helical transmembrane segments spans residues 213 to 233, 243 to 263, 284 to 304, 334 to 354, and 384 to 404; these read DTILGLCILALALSLAMMFTF, IFISLVILGLLFVCGVLWWLY, VLGFAIVSTGITAVLLVLIFV, LWTFAILIFFWVLWVAVLLSL, and LIGLIWTSEFILACQQMTIAG. 3 N-linked (GlcNAc...) asparagine glycosylation sites follow: Asn-412, Asn-503, and Asn-521. 2 helical membrane passes run 534-554 and 563-583; these read FIIFLGKVLVVCFTVFGGLMA and VWAVPLLLVAFFAYLVAHSFL. The interval 632–653 is disordered; the sequence is RAQQDKHSLRNEEGTELQAIVR. The span at 634-644 shows a compositional bias: basic and acidic residues; sequence QQDKHSLRNEE.

This sequence belongs to the CTL (choline transporter-like) family.

The protein resides in the membrane. This chain is Choline transporter-like protein 3 (SLC44A3), found in Homo sapiens (Human).